The primary structure comprises 336 residues: Cell division protein ZipA (336 aa).

At 1–2 (ME) the chain is on the periplasmic side. The helical transmembrane segment at 3–23 (LHILFFILAGLLIAVLIGFSL) threads the bilayer. The Cytoplasmic portion of the chain corresponds to 24 to 336 (WSARREKSRI…SRQAYLARVS (313 aa)).

It belongs to the ZipA family. Interacts with FtsZ via their C-terminal domains.

The protein resides in the cell inner membrane. Its function is as follows. Essential cell division protein that stabilizes the FtsZ protofilaments by cross-linking them and that serves as a cytoplasmic membrane anchor for the Z ring. Also required for the recruitment to the septal ring of downstream cell division proteins. The polypeptide is Cell division protein ZipA (Actinobacillus pleuropneumoniae serotype 5b (strain L20)).